A 455-amino-acid polypeptide reads, in one-letter code: Chromosomal replication initiator protein DnaA (455 aa).

Residues 1–75 (MDTNNNIEKE…EILSQNKVGM (75 aa)) form a domain I, interacts with DnaA modulators region. Positions 75–106 (MHLAHSVDVRIEVAPKIQINAQANINYKAIKT) are domain II. The interval 107–321 (SVKDSYTFEN…GAIIKISVNA (215 aa)) is domain III, AAA+ region. Residues G151, G153, K154, and T155 each contribute to the ATP site. The interval 322-455 (NLMNAPIDLN…DKKTAFNSSE (134 aa)) is domain IV, binds dsDNA.

It belongs to the DnaA family. As to quaternary structure, oligomerizes as a right-handed, spiral filament on DNA at oriC.

The protein localises to the cytoplasm. In terms of biological role, plays an essential role in the initiation and regulation of chromosomal replication. ATP-DnaA binds to the origin of replication (oriC) to initiate formation of the DNA replication initiation complex once per cell cycle. Binds the DnaA box (a 9 base pair repeat at the origin) and separates the double-stranded (ds)DNA. Forms a right-handed helical filament on oriC DNA; dsDNA binds to the exterior of the filament while single-stranded (ss)DNA is stabiized in the filament's interior. The ATP-DnaA-oriC complex binds and stabilizes one strand of the AT-rich DNA unwinding element (DUE), permitting loading of DNA polymerase. After initiation quickly degrades to an ADP-DnaA complex that is not apt for DNA replication. Binds acidic phospholipids. The protein is Chromosomal replication initiator protein DnaA of Helicobacter pylori (strain G27).